We begin with the raw amino-acid sequence, 43 residues long: Histone H3 (43 aa).

In terms of assembly, the nucleosome is a histone octamer containing two molecules each of H2A, H2B, H3 and H4 assembled in one H3-H4 heterotetramer and two H2A-H2B heterodimers. The octamer wraps approximately 147 bp of DNA.

The protein resides in the nucleus. It localises to the chromosome. In terms of biological role, core component of nucleosome. Nucleosomes wrap and compact DNA into chromatin, limiting DNA accessibility to the cellular machineries which require DNA as a template. Histones thereby play a central role in transcription regulation, DNA repair, DNA replication and chromosomal stability. DNA accessibility is regulated via a complex set of post-translational modifications of histones, also called histone code, and nucleosome remodeling. The protein is Histone H3 of Penaeus vannamei (Whiteleg shrimp).